The primary structure comprises 395 residues: MYFKYTAAALAAVLPLCSAQTWSKCNPLEKTCPPNKGLAASTYTADFTSASALDQWEVTAGKVPVGPQGAEFTVAKQGDAPTIDTDFYFFFGKAEVVMKAAPGTGVVSSIVLESDDLDEVDWEVLGGDTTQVQTNYFGKGDTTTYDRGTYVPVATPQETFHTYTIDWTKDAVTWSIDGAVVRTLTYNDAKGGTRFPQTPMRLRLGSWAGGDPSNPKGTIEWAGGLTDYSAGPYTMYVKSVRIENANPAESYTYSDNSGSWQSIKFDGSVDISSSSSVTSSTTSTASSASSTSSKTPSTSTLATSTKATPTPSGTSSGSNSSSSAEPTTTGGTGSSNTGSGSGSGSGSGSSSSTGSSTSAGASATPELSQGAAGSIKGSVTACALVFGAVAAVLAF.

An N-terminal signal peptide occupies residues 1-19 (MYFKYTAAALAAVLPLCSA). An intrachain disulfide couples Cys-25 to Cys-32. A GH16 domain is found at 45–230 (ADFTSASALD…WAGGLTDYSA (186 aa)). Residue Glu-119 is the Nucleophile of the active site. Catalysis depends on Glu-123, which acts as the Proton donor. 4 residues coordinate chitin: Glu-123, Arg-203, Trp-207, and Thr-218. Residues 271–374 (ISSSSSVTSS…PELSQGAAGS (104 aa)) are disordered. 2 stretches are compositionally biased toward low complexity: residues 272 to 338 (SSSS…SNTG) and 348 to 364 (GSSS…ASAT). Asn-319 is a glycosylation site (N-linked (GlcNAc...) asparagine). Residue Gly-370 is the site of GPI-like-anchor amidated glycine attachment. Positions 371–395 (AAGSIKGSVTACALVFGAVAAVLAF) are cleaved as a propeptide — removed in mature form.

This sequence belongs to the glycosyl hydrolase 16 family. CRH1 subfamily. The GPI-like anchor contains a phosphoceramide lipid group. The anchor position has not been determined.

The protein localises to the cell membrane. It localises to the secreted. It is found in the cell wall. It catalyses the reaction Random endo-hydrolysis of N-acetyl-beta-D-glucosaminide (1-&gt;4)-beta-linkages in chitin and chitodextrins.. Functionally, dual chitinase/transglycosylase that plays a role in cell wall architecture. Chitinase and transglycosylase activities are coupled. Required for the polysaccharide cross-linking at the septa and the cell wall. More specifically, transfers chitin to 1,6-beta-glucan in the cell wall. Chr5 shows acceptor substrate promiscuity and is also able to cross-link chitin to chitin. The polypeptide is Crh-like protein 5 (Aspergillus fumigatus (strain ATCC MYA-4609 / CBS 101355 / FGSC A1100 / Af293) (Neosartorya fumigata)).